A 131-amino-acid chain; its full sequence is Proteinase inhibitor (131 aa).

The signal sequence occupies residues 1–26 (MSASAKLSRMVCLLCGFFSTGISMAS). Residues C51 and C74 are joined by a disulfide bond.

The protein belongs to the protease inhibitor I38 family.

The protein resides in the periplasm. Functionally, inhibitor of the alkaline protease. It forms a non-covalent bond with the protease and may prevent its autocatalytic cleavage in the periplasm. The polypeptide is Proteinase inhibitor (inh) (Pseudomonas aeruginosa (strain ATCC 15692 / DSM 22644 / CIP 104116 / JCM 14847 / LMG 12228 / 1C / PRS 101 / PAO1)).